Here is a 202-residue protein sequence, read N- to C-terminus: 3-isopropylmalate dehydratase small subunit (202 aa).

This sequence belongs to the LeuD family. LeuD type 1 subfamily. As to quaternary structure, heterodimer of LeuC and LeuD.

It carries out the reaction (2R,3S)-3-isopropylmalate = (2S)-2-isopropylmalate. Its pathway is amino-acid biosynthesis; L-leucine biosynthesis; L-leucine from 3-methyl-2-oxobutanoate: step 2/4. Functionally, catalyzes the isomerization between 2-isopropylmalate and 3-isopropylmalate, via the formation of 2-isopropylmaleate. This is 3-isopropylmalate dehydratase small subunit from Buchnera aphidicola subsp. Pemphigus spyrothecae.